The chain runs to 421 residues: Serine hydroxymethyltransferase (421 aa).

Residues leucine 121 and 125 to 127 (GHL) contribute to the (6S)-5,6,7,8-tetrahydrofolate site. Lysine 229 carries the post-translational modification N6-(pyridoxal phosphate)lysine.

This sequence belongs to the SHMT family. As to quaternary structure, homodimer. Requires pyridoxal 5'-phosphate as cofactor.

It localises to the cytoplasm. The enzyme catalyses (6R)-5,10-methylene-5,6,7,8-tetrahydrofolate + glycine + H2O = (6S)-5,6,7,8-tetrahydrofolate + L-serine. It functions in the pathway one-carbon metabolism; tetrahydrofolate interconversion. It participates in amino-acid biosynthesis; glycine biosynthesis; glycine from L-serine: step 1/1. Its function is as follows. Catalyzes the reversible interconversion of serine and glycine with tetrahydrofolate (THF) serving as the one-carbon carrier. This reaction serves as the major source of one-carbon groups required for the biosynthesis of purines, thymidylate, methionine, and other important biomolecules. Also exhibits THF-independent aldolase activity toward beta-hydroxyamino acids, producing glycine and aldehydes, via a retro-aldol mechanism. This is Serine hydroxymethyltransferase from Actinobacillus pleuropneumoniae serotype 7 (strain AP76).